The sequence spans 89 residues: Small ribosomal subunit protein uS15 (89 aa).

This sequence belongs to the universal ribosomal protein uS15 family. Part of the 30S ribosomal subunit. Forms a bridge to the 50S subunit in the 70S ribosome, contacting the 23S rRNA.

Its function is as follows. One of the primary rRNA binding proteins, it binds directly to 16S rRNA where it helps nucleate assembly of the platform of the 30S subunit by binding and bridging several RNA helices of the 16S rRNA. Forms an intersubunit bridge (bridge B4) with the 23S rRNA of the 50S subunit in the ribosome. This chain is Small ribosomal subunit protein uS15, found in Hahella chejuensis (strain KCTC 2396).